The sequence spans 883 residues: Alanine--tRNA ligase (883 aa).

H560, H564, C665, and H669 together coordinate Zn(2+).

This sequence belongs to the class-II aminoacyl-tRNA synthetase family. Zn(2+) is required as a cofactor.

Its subcellular location is the cytoplasm. It catalyses the reaction tRNA(Ala) + L-alanine + ATP = L-alanyl-tRNA(Ala) + AMP + diphosphate. Its function is as follows. Catalyzes the attachment of alanine to tRNA(Ala) in a two-step reaction: alanine is first activated by ATP to form Ala-AMP and then transferred to the acceptor end of tRNA(Ala). Also edits incorrectly charged Ser-tRNA(Ala) and Gly-tRNA(Ala) via its editing domain. The sequence is that of Alanine--tRNA ligase from Mesomycoplasma hyopneumoniae (strain 232) (Mycoplasma hyopneumoniae).